An 846-amino-acid polypeptide reads, in one-letter code: Cap-specific mRNA (nucleoside-2'-O-)-methyltransferase 1 (846 aa).

The segment at 1-81 (MKRKSDSEQQ…LPDTLAEGSS (81 aa)) is disordered. The short motif at 2-20 (KRKSDSEQQPSVQCRKKKR) is the Bipartite nuclear localization signal element. A compositionally biased stretch (polar residues) spans 27-45 (NLSSTSDDDTQYSNHGTQE). A G-patch domain is found at 87-133 (YNSVSQKLMAKMGFREGEGLGKFGQGRKEIVETSKQKGRRGLGMVLK). Substrate-binding positions include 203–207 (KSAFD) and arginine 218. Residues 231-450 (FFLNRAAMKM…ERYVVCRGLK (220 aa)) enclose the RrmJ-type SAM-dependent 2'-O-MTase domain. Asparagine 234 is a binding site for S-adenosyl-L-methionine. Lysine 239 is an active-site residue. S-adenosyl-L-methionine is bound by residues 277–283 (CAGPGGF) and 335–336 (DV). Aspartate 364 is an active-site residue. 374–376 (NIQ) contacts substrate. Catalysis depends on lysine 404, which acts as the Proton acceptor. Residue asparagine 439 participates in substrate binding. The WW domain maps to 752–786 (KTINEPWSMAYSKSQKRKYFYNSKTKNSQFELPVE).

It localises to the nucleus. The enzyme catalyses a 5'-end (N(7)-methyl 5'-triphosphoguanosine)-ribonucleoside in mRNA + S-adenosyl-L-methionine = a 5'-end (N(7)-methyl 5'-triphosphoguanosine)-(2'-O-methyl-ribonucleoside) in mRNA + S-adenosyl-L-homocysteine + H(+). In terms of biological role, S-adenosyl-L-methionine-dependent methyltransferase that mediates mRNA cap1 2'-O-ribose methylation to the 5'-cap structure of mRNAs. Methylates the ribose of the first nucleotide of a m(7)GpppG-capped mRNA and small nuclear RNA (snRNA) to produce m(7)GpppRm (cap1). Displays a preference for cap0 transcripts. Cap1 modification is linked to higher levels of translation. May be involved in the interferon response pathway. This chain is Cap-specific mRNA (nucleoside-2'-O-)-methyltransferase 1 (cmtr1), found in Xenopus laevis (African clawed frog).